Consider the following 232-residue polypeptide: 2-C-methyl-D-erythritol 4-phosphate cytidylyltransferase (232 aa).

The protein belongs to the IspD/TarI cytidylyltransferase family. IspD subfamily.

It catalyses the reaction 2-C-methyl-D-erythritol 4-phosphate + CTP + H(+) = 4-CDP-2-C-methyl-D-erythritol + diphosphate. It functions in the pathway isoprenoid biosynthesis; isopentenyl diphosphate biosynthesis via DXP pathway; isopentenyl diphosphate from 1-deoxy-D-xylulose 5-phosphate: step 2/6. In terms of biological role, catalyzes the formation of 4-diphosphocytidyl-2-C-methyl-D-erythritol from CTP and 2-C-methyl-D-erythritol 4-phosphate (MEP). The polypeptide is 2-C-methyl-D-erythritol 4-phosphate cytidylyltransferase (Synechococcus elongatus (strain ATCC 33912 / PCC 7942 / FACHB-805) (Anacystis nidulans R2)).